A 350-amino-acid polypeptide reads, in one-letter code: UDP-rhamnose/UDP-galactose transporter 3 (350 aa).

Helical transmembrane passes span 12–32 (AVSD…IIMA), 41–61 (GFAF…TALV), 81–101 (LIWF…SLML), 104–124 (VGFY…MEWI), 133–153 (EVKI…VTDV), 160–180 (FICA…IGSL), 200–220 (AFSL…KFIM), 224–244 (MSSG…FCNI), 257–277 (SFQV…WLLF), and 286–306 (VAGM…MELE).

The protein belongs to the TPT transporter family. TPT (TC 2.A.7.9) subfamily.

It localises to the golgi apparatus membrane. In terms of biological role, nucleotide-sugar transporter that transports UDP-rhamnose or UDP-galactose and UMP in a strict counter-exchange mode. The chain is UDP-rhamnose/UDP-galactose transporter 3 from Arabidopsis thaliana (Mouse-ear cress).